The chain runs to 72 residues: Cytochrome b-c1 complex subunit 9 (72 aa).

The Mitochondrial matrix portion of the chain corresponds to 1–27; it reads MESAARRSGGGVLEGFYRLVMRRTPVY. Residues 28–53 form a helical membrane-spanning segment; that stretch reads VTFVIAGALLGERAVDYGVKTLWEKN. Residues 54–72 are Mitochondrial intermembrane-facing; that stretch reads NVGKRYEDISVLGQRPVDE.

Belongs to the UQCR10/QCR9 family. Component of the ubiquinol-cytochrome c oxidoreductase (cytochrome b-c1 complex, complex III, CIII), a multisubunit enzyme composed of 3 respiratory subunits cytochrome b, cytochrome c1 and Rieske protein, 2 core protein subunits, and additional low-molecular weight protein subunits. The complex exists as an obligatory dimer and forms supercomplexes (SCs) in the inner mitochondrial membrane with cytochrome c oxidase (complex IV, CIV).

The protein resides in the mitochondrion inner membrane. Functionally, component of the ubiquinol-cytochrome c oxidoreductase, a multisubunit transmembrane complex that is part of the mitochondrial electron transport chain which drives oxidative phosphorylation. The respiratory chain contains 3 multisubunit complexes succinate dehydrogenase (complex II, CII), ubiquinol-cytochrome c oxidoreductase (cytochrome b-c1 complex, complex III, CIII) and cytochrome c oxidase (complex IV, CIV), that cooperate to transfer electrons derived from NADH and succinate to molecular oxygen, creating an electrochemical gradient over the inner membrane that drives transmembrane transport and the ATP synthase. The cytochrome b-c1 complex catalyzes electron transfer from ubiquinol to cytochrome c, linking this redox reaction to translocation of protons across the mitochondrial inner membrane, with protons being carried across the membrane as hydrogens on the quinol. In the process called Q cycle, 2 protons are consumed from the matrix, 4 protons are released into the intermembrane space and 2 electrons are passed to cytochrome c. The chain is Cytochrome b-c1 complex subunit 9 from Solanum tuberosum (Potato).